The primary structure comprises 335 residues: RVS161-like protein RVS162 (335 aa).

Positions 17-310 (VMLKTGHIEQ…LDAQTRQDYI (294 aa)) constitute a BAR domain. The stretch at 30-56 (KEYEFQEKRYRTMEENSIKLQKNLRLY) forms a coiled coil. A disordered region spans residues 105–127 (HEEEGEEKEEEENDNTTTTTTTT). Positions 107–118 (EEGEEKEEEEND) are enriched in acidic residues. The stretch at 222–259 (TNIIELNHNQYEEKLKIYNQELTEVESKYVEINNQLLI) forms a coiled coil.

It localises to the cytoplasm. The protein localises to the cytoskeleton. In terms of biological role, component of a cytoskeletal structure that is required for membrane curvature. The chain is RVS161-like protein RVS162 from Candida albicans (strain SC5314 / ATCC MYA-2876) (Yeast).